Reading from the N-terminus, the 296-residue chain is tRNA dimethylallyltransferase (296 aa).

9-16 serves as a coordination point for ATP; sequence GPTAVGKT. 11–16 contacts substrate; the sequence is TAVGKT. The interaction with substrate tRNA stretch occupies residues 34–37; sequence DSRQ.

Belongs to the IPP transferase family. As to quaternary structure, monomer. Requires Mg(2+) as cofactor.

It catalyses the reaction adenosine(37) in tRNA + dimethylallyl diphosphate = N(6)-dimethylallyladenosine(37) in tRNA + diphosphate. Functionally, catalyzes the transfer of a dimethylallyl group onto the adenine at position 37 in tRNAs that read codons beginning with uridine, leading to the formation of N6-(dimethylallyl)adenosine (i(6)A). The sequence is that of tRNA dimethylallyltransferase from Chloroflexus aurantiacus (strain ATCC 29366 / DSM 635 / J-10-fl).